Consider the following 319-residue polypeptide: ATP-dependent 6-phosphofructokinase (319 aa).

Residue Gly-11 participates in ATP binding. Position 21-25 (21-25) interacts with ADP; the sequence is RAVVR. Residues 72–73 and 102–105 each bind ATP; these read RC and GDGS. Asp-103 contributes to the Mg(2+) binding site. 125 to 127 is a substrate binding site; that stretch reads TID. The Proton acceptor role is filled by Asp-127. An ADP-binding site is contributed by Arg-154. Substrate is bound by residues Arg-162 and 169 to 171; that span reads MGR. Residues 185–187, Arg-211, and 213–215 each bind ADP; these read GAE and KKH. Substrate is bound by residues Glu-222, Arg-243, and 249-252; that span reads HVQR.

Belongs to the phosphofructokinase type A (PFKA) family. ATP-dependent PFK group I subfamily. Prokaryotic clade 'B1' sub-subfamily. As to quaternary structure, homotetramer. Mg(2+) serves as cofactor.

The protein localises to the cytoplasm. It carries out the reaction beta-D-fructose 6-phosphate + ATP = beta-D-fructose 1,6-bisphosphate + ADP + H(+). It functions in the pathway carbohydrate degradation; glycolysis; D-glyceraldehyde 3-phosphate and glycerone phosphate from D-glucose: step 3/4. Its activity is regulated as follows. Allosterically activated by ADP and other diphosphonucleosides, and allosterically inhibited by phosphoenolpyruvate. In terms of biological role, catalyzes the phosphorylation of D-fructose 6-phosphate to fructose 1,6-bisphosphate by ATP, the first committing step of glycolysis. The sequence is that of ATP-dependent 6-phosphofructokinase from Geobacillus kaustophilus (strain HTA426).